A 153-amino-acid chain; its full sequence is 6,7-dimethyl-8-ribityllumazine synthase (153 aa).

5-amino-6-(D-ribitylamino)uracil contacts are provided by residues phenylalanine 22, 56-58, and 80-82; these read AFE and TVI. Position 85-86 (85-86) interacts with (2S)-2-hydroxy-3-oxobutyl phosphate; the sequence is ST. Histidine 88 functions as the Proton donor in the catalytic mechanism. Residue phenylalanine 113 participates in 5-amino-6-(D-ribitylamino)uracil binding. Residue arginine 127 coordinates (2S)-2-hydroxy-3-oxobutyl phosphate.

It belongs to the DMRL synthase family. Forms an icosahedral capsid composed of 60 subunits, arranged as a dodecamer of pentamers.

It carries out the reaction (2S)-2-hydroxy-3-oxobutyl phosphate + 5-amino-6-(D-ribitylamino)uracil = 6,7-dimethyl-8-(1-D-ribityl)lumazine + phosphate + 2 H2O + H(+). It functions in the pathway cofactor biosynthesis; riboflavin biosynthesis; riboflavin from 2-hydroxy-3-oxobutyl phosphate and 5-amino-6-(D-ribitylamino)uracil: step 1/2. Its function is as follows. Catalyzes the formation of 6,7-dimethyl-8-ribityllumazine by condensation of 5-amino-6-(D-ribitylamino)uracil with 3,4-dihydroxy-2-butanone 4-phosphate. This is the penultimate step in the biosynthesis of riboflavin. The protein is 6,7-dimethyl-8-ribityllumazine synthase of Haemophilus ducreyi (strain 35000HP / ATCC 700724).